Here is a 282-residue protein sequence, read N- to C-terminus: Trihydroxynaphthalene reductase PfmaI (282 aa).

Residues isoleucine 41, asparagine 114, and arginine 147 each contribute to the NADP(+) site. Residues serine 164 and tyrosine 178 each act as proton donor in the active site. 4 residues coordinate NADP(+): tyrosine 178, lysine 182, isoleucine 211, and threonine 213. Lysine 182 (lowers pKa of active site Tyr) is an active-site residue.

It belongs to the short-chain dehydrogenases/reductases (SDR) family.

It participates in pigment biosynthesis; melanin biosynthesis. In terms of biological role, trihydroxynaphthalene reductase involved the biosynthesis of dihydroxynaphthalene (DHN)-melanin, a bluish-green pigment forming a dark layer in the conidial wall that protects the conidia from UV radiations. The first step of the pathway is the production of the pentaketide 1,3,6,8-tetrahydroxynaphthalene (1,3,6,8-THN or T4HN) by the polyketide synthase PfmaE though condensation of acetyl-CoA with malonyl-CoA. T4HN is not stable and easily oxidizes into the stable form flaviolin. T4HN is also substrate of the hydroxynaphthalene reductase PfmaG to yield scytalone. The scytalone dehydratase PfmaJ then reduces scytalone to 1,3,8-THN. 1,3,8-THN is then substrate of the hydroxynaphthalene reductase PfmaI to yield vermelone. Vermelone is further converted by the multicopper oxidase PfmaD to 1,8-DHN. Finally the laccase PFICI_06862 transforms 1,8-DHN to DHN-melanin. The roles of the 5-oxoprolinase PfmaA and the proline iminopeptidase PfmaB within the cluster have not been elucidated yet. This Pestalotiopsis fici (strain W106-1 / CGMCC3.15140) protein is Trihydroxynaphthalene reductase PfmaI.